The following is a 207-amino-acid chain: Thymidylate kinase (207 aa).

The tract at residues 11–49 is disordered; that stretch reads EGIDGSGKSTQARRLAEHLRDTGRDPLLTREPGGSPGAE. Residue 12 to 19 participates in ATP binding; sequence GIDGSGKS. Residues 24 to 38 show a composition bias toward basic and acidic residues; sequence RLAEHLRDTGRDPLL.

The protein belongs to the thymidylate kinase family.

The catalysed reaction is dTMP + ATP = dTDP + ADP. Functionally, phosphorylation of dTMP to form dTDP in both de novo and salvage pathways of dTTP synthesis. The sequence is that of Thymidylate kinase from Dinoroseobacter shibae (strain DSM 16493 / NCIMB 14021 / DFL 12).